The primary structure comprises 518 residues: 2-isopropylmalate synthase (518 aa).

In terms of domain architecture, Pyruvate carboxyltransferase spans 5–269 (IIVLDTTLRD…STNVRLKELI (265 aa)). Residues aspartate 14, histidine 204, histidine 206, and asparagine 240 each contribute to the Mn(2+) site. The segment at 397 to 518 (ELDSFQVVTN…HDSQAPVSAR (122 aa)) is regulatory domain.

It belongs to the alpha-IPM synthase/homocitrate synthase family. LeuA type 1 subfamily. As to quaternary structure, homodimer. It depends on Mn(2+) as a cofactor.

It is found in the cytoplasm. It catalyses the reaction 3-methyl-2-oxobutanoate + acetyl-CoA + H2O = (2S)-2-isopropylmalate + CoA + H(+). The protein operates within amino-acid biosynthesis; L-leucine biosynthesis; L-leucine from 3-methyl-2-oxobutanoate: step 1/4. Its function is as follows. Catalyzes the condensation of the acetyl group of acetyl-CoA with 3-methyl-2-oxobutanoate (2-ketoisovalerate) to form 3-carboxy-3-hydroxy-4-methylpentanoate (2-isopropylmalate). In Geobacillus sp. (strain Y412MC10), this protein is 2-isopropylmalate synthase.